The following is a 505-amino-acid chain: Maturase K (505 aa).

Belongs to the intron maturase 2 family. MatK subfamily.

It is found in the plastid. Its subcellular location is the chloroplast. Usually encoded in the trnK tRNA gene intron. Probably assists in splicing its own and other chloroplast group II introns. In Kunzea capitata (Pink kunzea), this protein is Maturase K.